The sequence spans 314 residues: Serine/threonine-protein phosphatase PP2A-4 catalytic subunit (314 aa).

The Mn(2+) site is built by aspartate 62, histidine 64, aspartate 90, and asparagine 122. The active-site Proton donor is histidine 123. Mn(2+)-binding residues include histidine 172 and histidine 246.

Belongs to the PPP phosphatase family. PP-2A subfamily. Requires Mn(2+) as cofactor.

The protein resides in the cytoplasm. The enzyme catalyses O-phospho-L-seryl-[protein] + H2O = L-seryl-[protein] + phosphate. It carries out the reaction O-phospho-L-threonyl-[protein] + H2O = L-threonyl-[protein] + phosphate. This chain is Serine/threonine-protein phosphatase PP2A-4 catalytic subunit (PP2A4), found in Oryza sativa subsp. japonica (Rice).